The sequence spans 513 residues: ATP synthase subunit alpha (513 aa).

Position 169–176 (169–176 (GDRQIGKT)) interacts with ATP.

The protein belongs to the ATPase alpha/beta chains family. In terms of assembly, F-type ATPases have 2 components, CF(1) - the catalytic core - and CF(0) - the membrane proton channel. CF(1) has five subunits: alpha(3), beta(3), gamma(1), delta(1), epsilon(1). CF(0) has three main subunits: a(1), b(2) and c(9-12). The alpha and beta chains form an alternating ring which encloses part of the gamma chain. CF(1) is attached to CF(0) by a central stalk formed by the gamma and epsilon chains, while a peripheral stalk is formed by the delta and b chains.

The protein localises to the cell inner membrane. The catalysed reaction is ATP + H2O + 4 H(+)(in) = ADP + phosphate + 5 H(+)(out). In terms of biological role, produces ATP from ADP in the presence of a proton gradient across the membrane. The alpha chain is a regulatory subunit. This is ATP synthase subunit alpha from Shewanella woodyi (strain ATCC 51908 / MS32).